A 333-amino-acid chain; its full sequence is Probable cytosolic iron-sulfur protein assembly protein 1 (333 aa).

WD repeat units follow at residues 12 to 50, 55 to 94, 107 to 146, 153 to 192, 197 to 238, 250 to 288, and 298 to 333; these read LHDD…IIEE, AHKK…YNDE, GHEN…EEFE, EHSQ…WECC, GHEG…GEYE, AHTR…WIVE, and YETN…FDEN.

This sequence belongs to the WD repeat CIA1 family. Interacts with NAR1.

It localises to the cytoplasm. Its subcellular location is the nucleus. Functionally, essential component of the cytosolic iron-sulfur (Fe/S) protein assembly machinery. Required for the maturation of extramitochondrial Fe/S proteins. The polypeptide is Probable cytosolic iron-sulfur protein assembly protein 1 (Kluyveromyces lactis (strain ATCC 8585 / CBS 2359 / DSM 70799 / NBRC 1267 / NRRL Y-1140 / WM37) (Yeast)).